A 618-amino-acid polypeptide reads, in one-letter code: Chaperone protein DnaK (618 aa).

T175 carries the post-translational modification Phosphothreonine; by autocatalysis. A disordered region spans residues 579–618 (GAPGAEGFDSNMAGEANAGQNANNDDNVVDADYKVEDDEK). Residues 591–604 (AGEANAGQNANNDD) are compositionally biased toward low complexity.

Belongs to the heat shock protein 70 family.

Its function is as follows. Acts as a chaperone. The sequence is that of Chaperone protein DnaK from Clostridium tetani (strain Massachusetts / E88).